A 446-amino-acid chain; its full sequence is Transcription factor Dp-2 (446 aa).

Threonine 2 is subject to N-acetylthreonine. Residues serine 24 and serine 42 each carry the phosphoserine; by CDK2 modification. The interaction with CEBPA stretch occupies residues 60–82 (PQMIISTPQRIANSGSVLIGNPY). Positions 103 to 118 (SDRKRAREFIDSDFSE) match the Nuclear localization signal motif. Phosphoserine is present on serine 122. A DNA-binding region spans residues 129–210 (GKGLRHFSMK…PTGKKRNQVD (82 aa)). The DEF box motif lies at 176 to 210 (DQENIRRRVYDALNVLMAMNIISSLPTGKKRNQVD). Residues 219–292 (NLEIEKQRRI…RKTVIDCSIS (74 aa)) form a dimerization region. Residues 229-261 (ERIKQKRAQLQELLLQQIAFKNLVQRNRQNEQQ) are DCB1. The DCB2 stretch occupies residues 274 to 330 (LPFIIINTSRKTVIDCSISSDKFEYLFNFDNTFEIHDDIEVLKRMGMSFGLESGKCS). Residues 404-446 (LPASNSHQSSSAASHFSESRGETPCSFNDEDEEDEEEDPSSPE) form a disordered region. The span at 406–419 (ASNSHQSSSAASHF) shows a compositional bias: low complexity. The span at 431 to 446 (NDEDEEDEEEDPSSPE) shows a compositional bias: acidic residues.

This sequence belongs to the E2F/DP family. Component of the DRTF1/E2F transcription factor complex. Forms heterodimers with E2F family members. The complex can interact with hypophosphorylated retinoblastoma protein RB1 and related proteins (RBL1 and RBL2) that inhibit the E2F transactivation domain. During the cell cycle, RB becomes phosphorylated in mid-to-late G1 phase, detaches from the DRTF1/E2F complex rendering E2F transcriptionally active. Interacts with GMCL. Component of the DREAM complex (also named LINC complex) at least composed of E2F4, E2F5, LIN9, LIN37, LIN52, LIN54, MYBL1, MYBL2, RBL1, RBL2, RBBP4, TFDP1 and TFDP2. The complex exists in quiescent cells where it represses cell cycle-dependent genes. It dissociates in S phase when LIN9, LIN37, LIN52 and LIN54 form a subcomplex that binds to MYBL2. The complex TFDP2:E2F1 interacts with CEBPA; the interaction prevents CEBPA binding to target gene promoters and represses its transcriptional activity. In terms of processing, phosphorylation by E2F1-bound cyclin A-CDK2, in the S phase, inhibits E2F-mediated DNA binding and transactivation. As to expression, expressed in all tissues examined. Highest levels in spleen and heart.

The protein localises to the nucleus. Functionally, can stimulate E2F-dependent transcription. Binds DNA cooperatively with E2F family members through the E2 recognition site, 5'-TTTC[CG]CGC-3', found in the promoter region of a number of genes whose products are involved in cell cycle regulation or in DNA replication. The TFDP2:E2F complex functions in the control of cell-cycle progression from G1 to S phase. The E2F1:DP complex appears to mediate both cell proliferation and apoptosis. Blocks adipocyte differentiation by repressing CEBPA binding to its target gene promoters. This is Transcription factor Dp-2 (Tfdp2) from Mus musculus (Mouse).